The following is a 473-amino-acid chain: Photosystem II CP43 reaction center protein (473 aa).

Residues 1–14 (MKTLYSLRRFYHVE) constitute a propeptide that is removed on maturation. Thr-15 is modified (N-acetylthreonine). At Thr-15 the chain carries Phosphothreonine. Transmembrane regions (helical) follow at residues 69–93 (LFEV…PHLA), 134–155 (LLGP…KDRN), 178–200 (KALF…RKIT), 255–275 (KPFA…LSYS), and 291–312 (WFNN…ASQA). Glu-367 is a binding site for [CaMn4O5] cluster. A helical transmembrane segment spans residues 447–471 (RARAAAAGFEKGIDRDFEPVLSMTP).

This sequence belongs to the PsbB/PsbC family. PsbC subfamily. In terms of assembly, PSII is composed of 1 copy each of membrane proteins PsbA, PsbB, PsbC, PsbD, PsbE, PsbF, PsbH, PsbI, PsbJ, PsbK, PsbL, PsbM, PsbT, PsbX, PsbY, PsbZ, Psb30/Ycf12, at least 3 peripheral proteins of the oxygen-evolving complex and a large number of cofactors. It forms dimeric complexes. It depends on Binds multiple chlorophylls and provides some of the ligands for the Ca-4Mn-5O cluster of the oxygen-evolving complex. It may also provide a ligand for a Cl- that is required for oxygen evolution. PSII binds additional chlorophylls, carotenoids and specific lipids. as a cofactor.

Its subcellular location is the plastid. It localises to the chloroplast thylakoid membrane. One of the components of the core complex of photosystem II (PSII). It binds chlorophyll and helps catalyze the primary light-induced photochemical processes of PSII. PSII is a light-driven water:plastoquinone oxidoreductase, using light energy to abstract electrons from H(2)O, generating O(2) and a proton gradient subsequently used for ATP formation. The sequence is that of Photosystem II CP43 reaction center protein from Fagopyrum esculentum subsp. ancestrale (Wild buckwheat).